Reading from the N-terminus, the 459-residue chain is tRNA modification GTPase MnmE (459 aa).

Positions 22, 85, and 124 each coordinate (6S)-5-formyl-5,6,7,8-tetrahydrofolate. Positions G221 to F380 constitute a TrmE-type G domain. N231 is a K(+) binding site. GTP-binding positions include N231–S236, T250–T256, and D275–G278. S235 contributes to the Mg(2+) binding site. T250, V252, and T255 together coordinate K(+). T256 contacts Mg(2+). Position 459 (K459) interacts with (6S)-5-formyl-5,6,7,8-tetrahydrofolate.

This sequence belongs to the TRAFAC class TrmE-Era-EngA-EngB-Septin-like GTPase superfamily. TrmE GTPase family. Homodimer. Heterotetramer of two MnmE and two MnmG subunits. The cofactor is K(+).

The protein resides in the cytoplasm. In terms of biological role, exhibits a very high intrinsic GTPase hydrolysis rate. Involved in the addition of a carboxymethylaminomethyl (cmnm) group at the wobble position (U34) of certain tRNAs, forming tRNA-cmnm(5)s(2)U34. The polypeptide is tRNA modification GTPase MnmE (Staphylococcus haemolyticus (strain JCSC1435)).